The chain runs to 393 residues: NAD(P)H-quinone oxidoreductase subunit H, chloroplastic (393 aa).

The protein belongs to the complex I 49 kDa subunit family. NDH is composed of at least 16 different subunits, 5 of which are encoded in the nucleus.

It is found in the plastid. The protein localises to the chloroplast thylakoid membrane. It carries out the reaction a plastoquinone + NADH + (n+1) H(+)(in) = a plastoquinol + NAD(+) + n H(+)(out). The catalysed reaction is a plastoquinone + NADPH + (n+1) H(+)(in) = a plastoquinol + NADP(+) + n H(+)(out). In terms of biological role, NDH shuttles electrons from NAD(P)H:plastoquinone, via FMN and iron-sulfur (Fe-S) centers, to quinones in the photosynthetic chain and possibly in a chloroplast respiratory chain. The immediate electron acceptor for the enzyme in this species is believed to be plastoquinone. Couples the redox reaction to proton translocation, and thus conserves the redox energy in a proton gradient. In Morus indica (Mulberry), this protein is NAD(P)H-quinone oxidoreductase subunit H, chloroplastic.